The following is a 622-amino-acid chain: Chaperone protein HscA homolog (622 aa).

It belongs to the heat shock protein 70 family.

Its function is as follows. Chaperone involved in the maturation of iron-sulfur cluster-containing proteins. Has a low intrinsic ATPase activity which is markedly stimulated by HscB. The sequence is that of Chaperone protein HscA homolog from Acidovorax sp. (strain JS42).